The sequence spans 264 residues: Meiotic recombination protein REC102 (264 aa).

The protein belongs to the TOP6B-like family. Interacts with REC104; seems to form a functional unit with REC104. REC102-REC104 interacts with SKI8-SPO11 and this interaction is required for proper subcellular location of the proteins during the initiation of recombination. Interacts with MEI4, REC114 and SPO11.

It localises to the nucleus. Functionally, required for formation of the SPO11-mediated double-strand breaks (DSBs) that initiate meiotic recombination. May mediate the interaction between SPO11 subunits during meiosis. Also needed for homolog chromosome pairing, synaptonemal complex formation, and for the proper timing of the first meiotic division. Not required for mitosis and mitotic DNA repair mechanisms. In Saccharomyces cerevisiae (strain ATCC 204508 / S288c) (Baker's yeast), this protein is Meiotic recombination protein REC102.